A 366-amino-acid chain; its full sequence is Putative F-box protein At3g13624 (366 aa).

One can recognise an F-box domain in the interval 1–51; sequence MTTISDLPEDVVEEILPRVPLTSLSAVRSICKTWNTLSKNRVLCKAAVKKQ.

The protein is Putative F-box protein At3g13624 of Arabidopsis thaliana (Mouse-ear cress).